The chain runs to 250 residues: Uracil-DNA glycosylase (250 aa).

The active-site Proton acceptor is the D78.

It belongs to the uracil-DNA glycosylase (UDG) superfamily. UNG family.

The protein resides in the cytoplasm. It carries out the reaction Hydrolyzes single-stranded DNA or mismatched double-stranded DNA and polynucleotides, releasing free uracil.. In terms of biological role, excises uracil residues from the DNA which can arise as a result of misincorporation of dUMP residues by DNA polymerase or due to deamination of cytosine. This is Uracil-DNA glycosylase from Albidiferax ferrireducens (strain ATCC BAA-621 / DSM 15236 / T118) (Rhodoferax ferrireducens).